The sequence spans 1774 residues: 6-methylsalicylic acid synthase (1774 aa).

Over residues 1–14 the composition is skewed to polar residues; it reads MHSAATSTYPSGKT. A disordered region spans residues 1–21; that stretch reads MHSAATSTYPSGKTSPAPVGT. The Ketosynthase family 3 (KS3) domain occupies 32-457; sequence SNDVAVVGMA…GTVSHAVIEE (426 aa). Positions 186 to 238 are acyltransferase; it reads RISYHLNLMGPSTAVDAACASSLVAIHHGVQAIRLGESKVAIVGGVNALCGPG. Active-site for beta-ketoacyl synthase activity residues include cysteine 204, histidine 339, and histidine 379. An acetyl/malonyl transferases region spans residues 642-676; sequence NGITPQAVIGHSVGEIAASVVAGALSPAEGALIVT. The For malonyltransferase activity role is filled by serine 653. An N-terminal hotdog fold region spans residues 926–1045; sequence HTLLGQRIPV…AYWDRKVAGS (120 aa). A PKS/mFAS DH domain is found at 926–1202; it reads HTLLGQRIPV…FSEIEGTPGV (277 aa). Histidine 958 functions as the Proton acceptor; for dehydratase activity in the catalytic mechanism. Residues 1059 to 1202 form a C-terminal hotdog fold region; the sequence is VTKLADNFSI…FSEIEGTPGV (144 aa). Aspartate 1123 acts as the Proton donor; for dehydratase activity in catalysis. Positions 1403–1450 are 2-oxoacyl reductase; the sequence is GPRLLPRPEGTYLITGGLGVLGLEVADFLVEKGARRLLLISRRALPPR. 1419-1424 serves as a coordination point for NADP(+); the sequence is GLGVLG. The Carrier domain occupies 1698–1772; the sequence is AYLDEKIRGC…HLAVWFAEKL (75 aa). At serine 1732 the chain carries O-(pantetheine 4'-phosphoryl)serine.

Homomultimer.

The catalysed reaction is 3 malonyl-CoA + acetyl-CoA + NADPH + 3 H(+) = 6-methylsalicylate + 3 CO2 + NADP(+) + 4 CoA + H2O. The protein operates within mycotoxin biosynthesis; patulin biosynthesis. In terms of biological role, this multifunctional enzyme is a polyketide synthase. It catalyzes a total of 11 steps by seven different component enzymes, in the biosynthesis of the antibiotic patulin. This Penicillium patulum (Penicillium griseofulvum) protein is 6-methylsalicylic acid synthase.